The sequence spans 69 residues: DNA-directed RNA polymerase subunit epsilon (69 aa).

It belongs to the RNA polymerase subunit epsilon family. In terms of assembly, RNAP is composed of a core of 2 alpha, a beta and a beta' subunit. The core is associated with a delta subunit, and at least one of epsilon or omega. When a sigma factor is associated with the core the holoenzyme is formed, which can initiate transcription.

The enzyme catalyses RNA(n) + a ribonucleoside 5'-triphosphate = RNA(n+1) + diphosphate. Its function is as follows. A non-essential component of RNA polymerase (RNAP). The sequence is that of DNA-directed RNA polymerase subunit epsilon from Listeria monocytogenes serotype 4b (strain CLIP80459).